Here is a 459-residue protein sequence, read N- to C-terminus: N,N-dimethyl phenylurea N-demethylase subunit alpha (459 aa).

A Rieske domain is found at 55–166 (WVFVAHETEI…VESYHGFIFT (112 aa)). Cysteine 97, histidine 99, cysteine 117, and histidine 120 together coordinate [2Fe-2S] cluster. The Fe cation site is built by histidine 225, histidine 230, and aspartate 386.

The protein belongs to the bacterial ring-hydroxylating dioxygenase alpha subunit family. PdmA (subunit alpha) and PdmB (subunit beta) form the oxygenase component of a bacterial Rieske non-heme iron oxygenase (RO) system. The cofactor is [2Fe-2S] cluster. It depends on Fe cation as a cofactor.

The catalysed reaction is a 1,1-dimethyl-3-phenylurea + 2 reduced [2Fe-2S]-[ferredoxin] + O2 + 2 H(+) = a 1-methyl-3-phenylurea + formaldehyde + 2 oxidized [2Fe-2S]-[ferredoxin] + H2O. It catalyses the reaction isoproturon + 2 reduced [2Fe-2S]-[ferredoxin] + O2 + 2 H(+) = 1-methyl-3-[4-(propan-2-yl)phenyl]urea + formaldehyde + 2 oxidized [2Fe-2S]-[ferredoxin] + H2O. It carries out the reaction chlorotoluron + 2 reduced [2Fe-2S]-[ferredoxin] + O2 + 2 H(+) = 3-(3-chloro-4-methylphenyl)-1-methylurea + formaldehyde + 2 oxidized [2Fe-2S]-[ferredoxin] + H2O. The enzyme catalyses metoxuron + 2 reduced [2Fe-2S]-[ferredoxin] + O2 + 2 H(+) = 3-(3-chloro-4-methoxylphenyl)-1-methylurea + formaldehyde + 2 oxidized [2Fe-2S]-[ferredoxin] + H2O. The catalysed reaction is monuron + 2 reduced [2Fe-2S]-[ferredoxin] + O2 + 2 H(+) = 3-(4-chlorophenyl)-1-methylurea + formaldehyde + 2 oxidized [2Fe-2S]-[ferredoxin] + H2O. It catalyses the reaction diuron + 2 reduced [2Fe-2S]-[ferredoxin] + O2 + 2 H(+) = 3-(3,4-dichlorophenyl)-1-methylurea + formaldehyde + 2 oxidized [2Fe-2S]-[ferredoxin] + H2O. It carries out the reaction fluometuron + 2 reduced [2Fe-2S]-[ferredoxin] + O2 + 2 H(+) = 3-[3-(trifluoromethyl)phenyl]-1-methylurea + formaldehyde + 2 oxidized [2Fe-2S]-[ferredoxin] + H2O. The enzyme catalyses fenuron + 2 reduced [2Fe-2S]-[ferredoxin] + O2 + 2 H(+) = 1-methyl-3-phenylurea + formaldehyde + 2 oxidized [2Fe-2S]-[ferredoxin] + H2O. It participates in xenobiotic degradation. Its activity is regulated as follows. Activity is stimulated in vitro by coexpression of a [3Fe-4S]-type ferredoxin. In terms of biological role, part of the multicomponent N,N-dimethyl phenylurea N-demethylase responsible for the initial N-demethylation step during the bacterial metabolism of N,N-dimethyl-substituted phenylurea herbicides. Catalyzes the mono-N-demethylation of N,N-dimethyl-substituted phenylurea herbicides to their mono-N-demethylated derivatives. Is active on isoproturon (IPU), chlorotoluron, metoxuron, monoron, diuron, fluometuron and fenuron, but cannot transform the N-methoxy-N-methyl-substituted herbicides. This Sphingobium sp. (strain YBL2) protein is N,N-dimethyl phenylurea N-demethylase subunit alpha.